A 1309-amino-acid chain; its full sequence is Phospholipase A I (1309 aa).

4 LRR repeats span residues Leu155 to Leu178, Asn180 to Cys201, Gly203 to Ala223, and Met224 to Gln248. ARM repeat units follow at residues Asp315–Arg356, Ser401–Phe439, and Cys440–Glu481. The region spanning Leu502–Ile746 is the PNPLA domain. A GXGXXG motif is present at residues Gly506 to Gly511. Positions Gly538–Gly542 match the GXSXG motif. Catalysis depends on Ser540, which acts as the Nucleophile. Asp733 acts as the Proton acceptor in catalysis. The DGA/G signature appears at Asp733–Ala735. The tract at residues Val1183 to Arg1253 is disordered. Over residues Asn1188 to Asp1208 the composition is skewed to polar residues. Acidic residues predominate over residues Gly1216–Glu1235.

This sequence belongs to the patatin family.

It is found in the plastid. The protein resides in the chloroplast. Functionally, possesses non-specific lipolytic acyl hydrolase (LAH) activity. Catalyzes the hydrolysis of the galactolipids monogalactosyldiacylglycerol (MGDG) and digalactosyldiacylglycerol (DGDG), and less efficiently the phoshpolipids phosphatidylcholine (PC), phosphatidylethanolamine (PE), phosphatidylglycerol (PG), phosphatidylserine (PS) and phosphatidylinositol (PI). Hydrolyzes phospholipids at both the sn-1 and sn-2 positions. Involved in basal jasmonic acid production and promotes resistance to the necrotrophic fungal pathogen Botrytis cinerea. In Arabidopsis thaliana (Mouse-ear cress), this protein is Phospholipase A I (PLA1).